A 305-amino-acid chain; its full sequence is Glycine--tRNA ligase alpha subunit (305 aa).

It belongs to the class-II aminoacyl-tRNA synthetase family. Tetramer of two alpha and two beta subunits.

It is found in the cytoplasm. The enzyme catalyses tRNA(Gly) + glycine + ATP = glycyl-tRNA(Gly) + AMP + diphosphate. This Streptococcus pneumoniae (strain Hungary19A-6) protein is Glycine--tRNA ligase alpha subunit.